The chain runs to 98 residues: Acylphosphatase (98 aa).

One can recognise an Acylphosphatase-like domain in the interval 12 to 98; it reads RLSAWVHGHV…DATMTGFSER (87 aa). Residues R27 and N45 contribute to the active site.

This sequence belongs to the acylphosphatase family.

It catalyses the reaction an acyl phosphate + H2O = a carboxylate + phosphate + H(+). This Mycolicibacterium smegmatis (strain ATCC 700084 / mc(2)155) (Mycobacterium smegmatis) protein is Acylphosphatase (acyP).